Reading from the N-terminus, the 286-residue chain is MQTIPDALFGIIGYPVSHSVSPAMQNAAFKHCKLNYLYLTIAAKPEDLQNVIASMRPLNIRGLNVTIPHKIEVIKYIDTLDPAAKKIGAVNTIVNENGQLKGYNTDFGGFVRLLEHNRIAPAKHRFALLGAGGSAHAISLAICTLGGHLTVLARQEEKAKDLAAKMCLRFKGKAQGLELNEANLEETLAESDIIVNCTPIGMGNLAGQSLIPPRLLRPDLTVIDAIYNPCKTRLLEDAEKKGAKIINGLEMLVWQGAMSFEIWTSQKAPFRVMMKEAEMALDENEK.

Shikimate-binding positions include serine 19–serine 21 and threonine 66. Lysine 70 (proton acceptor) is an active-site residue. Shikimate is bound by residues asparagine 91 and aspartate 106. Residues glycine 130 to serine 134 and alanine 225 each bind NADP(+). Tyrosine 227 is a shikimate binding site. Glycine 248 serves as a coordination point for NADP(+).

The protein belongs to the shikimate dehydrogenase family. In terms of assembly, homodimer.

The enzyme catalyses shikimate + NADP(+) = 3-dehydroshikimate + NADPH + H(+). It functions in the pathway metabolic intermediate biosynthesis; chorismate biosynthesis; chorismate from D-erythrose 4-phosphate and phosphoenolpyruvate: step 4/7. Involved in the biosynthesis of the chorismate, which leads to the biosynthesis of aromatic amino acids. Catalyzes the reversible NADPH linked reduction of 3-dehydroshikimate (DHSA) to yield shikimate (SA). This Dehalococcoides mccartyi (strain CBDB1) protein is Shikimate dehydrogenase (NADP(+)).